The primary structure comprises 199 residues: Nucleoside triphosphate pyrophosphatase (199 aa).

Aspartate 76 functions as the Proton acceptor in the catalytic mechanism.

This sequence belongs to the Maf family. The cofactor is a divalent metal cation.

Its subcellular location is the cytoplasm. It carries out the reaction a ribonucleoside 5'-triphosphate + H2O = a ribonucleoside 5'-phosphate + diphosphate + H(+). The enzyme catalyses a 2'-deoxyribonucleoside 5'-triphosphate + H2O = a 2'-deoxyribonucleoside 5'-phosphate + diphosphate + H(+). In terms of biological role, nucleoside triphosphate pyrophosphatase. May have a dual role in cell division arrest and in preventing the incorporation of modified nucleotides into cellular nucleic acids. This is Nucleoside triphosphate pyrophosphatase from Ruegeria sp. (strain TM1040) (Silicibacter sp.).